The following is a 209-amino-acid chain: Peptide methionine sulfoxide reductase MsrA (209 aa).

The active site involves cysteine 51.

It belongs to the MsrA Met sulfoxide reductase family.

It carries out the reaction L-methionyl-[protein] + [thioredoxin]-disulfide + H2O = L-methionyl-(S)-S-oxide-[protein] + [thioredoxin]-dithiol. The enzyme catalyses [thioredoxin]-disulfide + L-methionine + H2O = L-methionine (S)-S-oxide + [thioredoxin]-dithiol. Functionally, has an important function as a repair enzyme for proteins that have been inactivated by oxidation. Catalyzes the reversible oxidation-reduction of methionine sulfoxide in proteins to methionine. This chain is Peptide methionine sulfoxide reductase MsrA, found in Vibrio vulnificus (strain CMCP6).